A 289-amino-acid polypeptide reads, in one-letter code: Protease HtpX homolog (289 aa).

A run of 2 helical transmembrane segments spans residues 3 to 23 (IVGT…WFFF) and 28 to 48 (TILA…YKVG). Histidine 129 provides a ligand contact to Zn(2+). Glutamate 130 is an active-site residue. Position 133 (histidine 133) interacts with Zn(2+). The next 2 helical transmembrane spans lie at 144 to 164 (LGQG…LFSG) and 172 to 192 (FLAI…VLAI). Position 197 (glutamate 197) interacts with Zn(2+). Residues 222-250 (SQGNEQAAQQQRQRTSRGRGRRQRGQRND) form a disordered region. Basic residues predominate over residues 235–246 (RTSRGRGRRQRG).

It belongs to the peptidase M48B family. The cofactor is Zn(2+).

It is found in the cell membrane. The chain is Protease HtpX homolog from Halobacterium salinarum (strain ATCC 700922 / JCM 11081 / NRC-1) (Halobacterium halobium).